Reading from the N-terminus, the 358-residue chain is F-box only protein 25 (358 aa).

The interaction with beta-actin stretch occupies residues 1 to 83; sequence MPFLGQDWRS…NDTNTQSFYR (83 aa). Residues 226–274 enclose the F-box domain; sequence LTLSDLPLHMLNNILYRFSDGWDIITLGQVTPTLYMLSEDRQLWKKLCQ.

In terms of assembly, part of a SCF (SKP1-cullin-F-box) protein ligase complex consisting of FBXO25, SKP1, CUL1 and RBX1. Interacts directly with SKP1 and CUL1. Interacts (via C-terminus) with beta-actin (via N-terminus).

Its subcellular location is the nucleus. Its pathway is protein modification; protein ubiquitination. Its function is as follows. Substrate-recognition component of the SCF (SKP1-CUL1-F-box protein)-type E3 ubiquitin ligase complex. May play a role in accumulation of expanded polyglutamine (polyQ) protein huntingtin (HTT). The protein is F-box only protein 25 (FBXO25) of Macaca fascicularis (Crab-eating macaque).